Reading from the N-terminus, the 293-residue chain is Acetyl-coenzyme A carboxylase carboxyl transferase subunit beta (293 aa).

A CoA carboxyltransferase N-terminal domain is found at 29–293 (LWVKCSECSQ…GVKELAEANI (265 aa)). Residues Cys-33, Cys-36, Cys-52, and Cys-55 each contribute to the Zn(2+) site. The C4-type zinc-finger motif lies at 33–55 (CSECSQVAYRKDLISNFNVCSNC).

Belongs to the AccD/PCCB family. Acetyl-CoA carboxylase is a heterohexamer composed of biotin carboxyl carrier protein (AccB), biotin carboxylase (AccC) and two subunits each of ACCase subunit alpha (AccA) and ACCase subunit beta (AccD). Zn(2+) is required as a cofactor.

It is found in the cytoplasm. The enzyme catalyses N(6)-carboxybiotinyl-L-lysyl-[protein] + acetyl-CoA = N(6)-biotinyl-L-lysyl-[protein] + malonyl-CoA. The protein operates within lipid metabolism; malonyl-CoA biosynthesis; malonyl-CoA from acetyl-CoA: step 1/1. In terms of biological role, component of the acetyl coenzyme A carboxylase (ACC) complex. Biotin carboxylase (BC) catalyzes the carboxylation of biotin on its carrier protein (BCCP) and then the CO(2) group is transferred by the transcarboxylase to acetyl-CoA to form malonyl-CoA. This Prochlorococcus marinus (strain MIT 9312) protein is Acetyl-coenzyme A carboxylase carboxyl transferase subunit beta.